Reading from the N-terminus, the 222-residue chain is MRSRKLTGGVRSSARLRARSCSSTSLASAGDIASSTSAKTTCLASSSHKATDRRTSKKFKYDKGHLLKAELQKVDPKSDISSLPKVVPVAPCENKFAEDGAEAAVPAPENTAPPQGCSKPVSEEPSVKAEEGLPTAPRSAAAAQETHDSSASQAEPVPVLQMDSSVFLDDDSNQPMPVSRFFGNVELMQDLPPASSSCPSMSRREFRKMHFRAKDDDEDAEG.

2 disordered regions span residues 23-57 (STSL…RTSK) and 98-158 (EDGA…EPVP). Positions 33 to 48 (ASSTSAKTTCLASSSH) are enriched in polar residues. Over residues 121–131 (VSEEPSVKAEE) the composition is skewed to basic and acidic residues. Position 172 is a phosphoserine (Ser-172).

It belongs to the UPF0688 family.

It localises to the nucleus. The chain is UPF0688 protein C1orf174 homolog from Rattus norvegicus (Rat).